A 76-amino-acid polypeptide reads, in one-letter code: Exodeoxyribonuclease 7 small subunit (76 aa).

It belongs to the XseB family. As to quaternary structure, heterooligomer composed of large and small subunits.

The protein localises to the cytoplasm. The catalysed reaction is Exonucleolytic cleavage in either 5'- to 3'- or 3'- to 5'-direction to yield nucleoside 5'-phosphates.. Bidirectionally degrades single-stranded DNA into large acid-insoluble oligonucleotides, which are then degraded further into small acid-soluble oligonucleotides. In Geobacillus thermodenitrificans (strain NG80-2), this protein is Exodeoxyribonuclease 7 small subunit.